The primary structure comprises 196 residues: Ribosome maturation factor RimP (196 aa).

A disordered region spans residues 164–196; that stretch reads LAPQKPNKPGPKKPGHDKKKPSNEPAAGKPRAE. Residues 173 to 182 show a composition bias toward basic residues; sequence GPKKPGHDKK.

The protein belongs to the RimP family.

It is found in the cytoplasm. Required for maturation of 30S ribosomal subunits. The sequence is that of Ribosome maturation factor RimP from Xanthomonas campestris pv. campestris (strain B100).